The sequence spans 37 residues: Large ribosomal subunit protein bL36 (37 aa).

The protein belongs to the bacterial ribosomal protein bL36 family.

The chain is Large ribosomal subunit protein bL36 from Francisella tularensis subsp. mediasiatica (strain FSC147).